The sequence spans 424 residues: Double-stranded RNA-binding protein 8 (424 aa).

Residues 1-10 (MDMPPTPLPP) show a composition bias toward pro residues. Positions 1–22 (MDMPPTPLPPETANTSPAPNGA) are disordered. 2 DRBM domains span residues 33–102 (VFKS…EIVK) and 118–185 (LCKN…AIQG). Composition is skewed to basic and acidic residues over residues 287–308 (KRVEAEPPRDIEMVQPDKENQH) and 318–328 (DEARVEQEPSR). A disordered region spans residues 287–330 (KRVEAEPPRDIEMVQPDKENQHSDAALVQPDDEARVEQEPSRDI).

In terms of biological role, binds double-stranded RNA. The protein is Double-stranded RNA-binding protein 8 (DRB8) of Oryza sativa subsp. japonica (Rice).